The primary structure comprises 172 residues: Thioredoxin M5, chloroplastic (172 aa).

The transit peptide at 1–59 (MALETCFRAWATLHAPQPPSSGGSRDRLLLSGAGSSQSKPRLSVASPSPLRPASRFACQ) directs the protein to the chloroplast. Residues 17–47 (QPPSSGGSRDRLLLSGAGSSQSKPRLSVASP) are disordered. Residues 60-171 (CSNVVDEVVV…LATIIDKYVS (112 aa)) enclose the Thioredoxin domain. Residues Cys95 and Cys98 each act as nucleophile in the active site. Cys95 and Cys98 are oxidised to a cystine.

This sequence belongs to the thioredoxin family. Plant M-type subfamily. Expressed in leaves and at lower levels in flowers.

It localises to the plastid. It is found in the chloroplast. Its function is as follows. Thiol-disulfide oxidoreductase probably involved in the redox regulation of chloroplastic enzymes. Required for chloroplast biogenesis and differentiation. Functions as an electron donor for plastidial 2-Cys peroxiredoxins and participates in hydrogen peroxide scavenging system in chloroplasts. Possesses reducing activity towards insulin disulfide bonds. This chain is Thioredoxin M5, chloroplastic (TRXM), found in Oryza sativa subsp. japonica (Rice).